We begin with the raw amino-acid sequence, 173 residues long: Alpha-crystallin B chain (173 aa).

Met1 carries the post-translational modification N-acetylmethionine. The sHSP domain occupies 54 to 162; sequence RLPSWIESGL…PERSIPITRE (109 aa). Residues His81, His102, Glu104, and His109 each coordinate Zn(2+).

The protein belongs to the small heat shock protein (HSP20) family. In terms of assembly, heteromer composed of three CRYAA and one CRYAB subunits. Aggregates with homologous proteins, including the small heat shock protein HSPB1, to form large heteromeric complexes. Inter-subunit bridging via zinc ions enhances stability, which is crucial as there is no protein turn over in the lens.

In terms of biological role, may contribute to the transparency and refractive index of the lens. The chain is Alpha-crystallin B chain (CRYAB) from Aquarana catesbeiana (American bullfrog).